A 78-amino-acid chain; its full sequence is Transmembrane protein 258 (78 aa).

The Cytoplasmic portion of the chain corresponds to 1–18 (MDVMQRYVSPVNPAVFPH). A helical membrane pass occupies residues 19-39 (LATVLLVIGTFFTAWFFIFVV). At 40–53 (SRKSSKESTLIKEL) the chain is on the cytoplasmic side. The helical transmembrane segment at 54–74 (LISLCASIFLGFGIVFLLLTV) threads the bilayer. The Perinuclear space portion of the chain corresponds to 75 to 78 (GIYV).

Belongs to the OST5 family. In terms of assembly, homodimer. Component of the oligosaccharyltransferase (OST) complex. Interacts with klar and Msp300, components of LINC complex.

Its subcellular location is the nucleus outer membrane. It is found in the cytoplasm. It localises to the endoplasmic reticulum membrane. Functionally, subunit of the oligosaccharyl transferase (OST) complex that catalyzes the initial transfer of a defined glycan (Glc(3)Man(9)GlcNAc(2) in eukaryotes) from the lipid carrier dolichol-pyrophosphate to an asparagine residue within an Asn-X-Ser/Thr consensus motif in nascent polypeptide chains, the first step in protein N-glycosylation. N-glycosylation occurs cotranslationally and the complex associates with the Sec61 complex at the channel-forming translocon complex that mediates protein translocation across the endoplasmic reticulum (ER). All subunits are required for a maximal enzyme activity. In addition may regulates nuclear envelope (NE) architecture and nuclear positioning through the linker of nucleoskeleton and cytoskeleton (LINC)-dependent and -independent mechanisms. This Drosophila melanogaster (Fruit fly) protein is Transmembrane protein 258.